A 354-amino-acid chain; its full sequence is Cysteine and histidine-rich domain-containing protein morgana (354 aa).

Residues C4, C9, C23, H26, C41, C42, C58, H63, C140, C145, C159, H162, C177, C178, C194, and H199 each coordinate Zn(2+). 2 CHORD domains span residues 4-63 (CYNR…LAKH) and 140-199 (CKNN…YGEH). A CS domain is found at 210-301 (VVQCRYDWHQ…LEPGSWSNLN (92 aa)). S324 and S339 each carry phosphoserine.

As to quaternary structure, interacts with Hsp83.

It is found in the cytoplasm. The protein localises to the nucleus. It localises to the cytoskeleton. Its subcellular location is the spindle. Its function is as follows. Regulates centrosome duplication and mitotic spindle dynamics. Also involved in controlling the size of dendritic arbors. May act as co-chaperone for Hsp83. During mitotic spindle assembly, regulates microtubule (MT) dynamics by binding to MTs and promoting MT polymerisation. Promotes the elongation and retraction of terminal branches in response to changes in body size, possibly acting downstream of the TORC2 pathway to enable proportional scaling of dendritic arbors. In Drosophila melanogaster (Fruit fly), this protein is Cysteine and histidine-rich domain-containing protein morgana.